The following is a 90-amino-acid chain: MPAREITIINKLGLHARAAAKFVGVAGRFPCQVPVGRAPDKLVDGKSIMAVMMLAAGKGTQVHLHTXGEQDSDAMDALVELINNFFDEGE.

Residues 1-89 (MPAREITIIN…ELINNFFDEG (89 aa)) enclose the HPr domain. Residue H15 is the Pros-phosphohistidine intermediate of the active site.

This sequence belongs to the HPr family.

It localises to the cytoplasm. Its function is as follows. General (non sugar-specific) component of the phosphoenolpyruvate-dependent sugar phosphotransferase system (sugar PTS). This major carbohydrate active-transport system catalyzes the phosphorylation of incoming sugar substrates concomitantly with their translocation across the cell membrane. The phosphoryl group from phosphoenolpyruvate (PEP) is transferred to the phosphoryl carrier protein HPr by enzyme I. Phospho-HPr then transfers it to the PTS EIIA domain. The polypeptide is Phosphocarrier protein HPr (ptsH) (Pseudomonas putida (Arthrobacter siderocapsulatus)).